The sequence spans 268 residues: Helix-loop-helix protein 25 (268 aa).

A compositionally biased stretch (polar residues) spans 1–23 (MPKVIQSSMSDYRSVPYNQTPKS). The interval 1 to 29 (MPKVIQSSMSDYRSVPYNQTPKSASERKR) is disordered. Residues 92 to 105 (ERRKVKTEREKIRR) are basic motif. A bHLH domain is found at 92–149 (ERRKVKTEREKIRRKKQDDCYAELKFFILNKQMGSYEQRLKLERITILEIIIDYIKHN). A helix-loop-helix motif region spans residues 106 to 149 (KKQDDCYAELKFFILNKQMGSYEQRLKLERITILEIIIDYIKHN).

It localises to the nucleus. Functionally, probable transcription factor. Modulates lifespan and also recovery from the developmentally arrested larval state known as dauer, perhaps acting upstream of phosphatase PTEN/daf-18. Regulates expression of genes involved in cell division, cell-cycle regulation, and sexual reproduction, including daf-18. This Caenorhabditis elegans protein is Helix-loop-helix protein 25.